Consider the following 244-residue polypeptide: DNA repair protein RecO (244 aa).

The protein belongs to the RecO family.

Involved in DNA repair and RecF pathway recombination. This Jannaschia sp. (strain CCS1) protein is DNA repair protein RecO.